We begin with the raw amino-acid sequence, 216 residues long: uncharacterized protein (216 aa).

2 consecutive 4Fe-4S ferredoxin-type domains span residues 160–189 (DDKP…IDEK) and 188–216 (EKPK…ALLP). [4Fe-4S] cluster contacts are provided by cysteine 169, cysteine 172, cysteine 175, cysteine 179, cysteine 197, cysteine 200, cysteine 203, and cysteine 207.

It belongs to the FrhG family.

This is an uncharacterized protein from Methanocaldococcus jannaschii (strain ATCC 43067 / DSM 2661 / JAL-1 / JCM 10045 / NBRC 100440) (Methanococcus jannaschii).